The sequence spans 300 residues: Small ribosomal subunit protein uS2 (300 aa).

The interval 278 to 300 (GEAQTGNEGWGTEAAAPAATTQW) is disordered.

The protein belongs to the universal ribosomal protein uS2 family. As to quaternary structure, component of the small ribosomal subunit. Mature ribosomes consist of a small (40S) and a large (60S) subunit. The 40S subunit contains about 33 different proteins and 1 molecule of RNA (18S). The 60S subunit contains about 49 different proteins and 3 molecules of RNA (25S, 5.8S and 5S). Interacts with rps21.

It localises to the cytoplasm. Its function is as follows. Required for the assembly and/or stability of the 40S ribosomal subunit. Required for the processing of the 20S rRNA-precursor to mature 18S rRNA in a late step of the maturation of 40S ribosomal subunits. The chain is Small ribosomal subunit protein uS2 (rps0) from Pyrenophora tritici-repentis (strain Pt-1C-BFP) (Wheat tan spot fungus).